The primary structure comprises 94 residues: Small ribosomal subunit protein bS20 (94 aa).

The protein belongs to the bacterial ribosomal protein bS20 family.

In terms of biological role, binds directly to 16S ribosomal RNA. This Symbiobacterium thermophilum (strain DSM 24528 / JCM 14929 / IAM 14863 / T) protein is Small ribosomal subunit protein bS20.